The following is a 157-amino-acid chain: Cuticle protein 19 (157 aa).

6 tandem repeats follow at residues 11–14 (AAPA), 18–21 (AAPA), 24–27 (AAPA), 29–32 (AAPA), 39–42 (AAPA), and 47–50 (AAPA). The Chitin-binding type R&amp;R domain maps to 56-127 (YPKYAFEYGV…SGPSAHPAPA (72 aa)). Repeat 7 spans residues 141–144 (AAPA).

Its function is as follows. Component of the cuticle of migratory locust which contains more than 100 different structural proteins. The polypeptide is Cuticle protein 19 (Locusta migratoria (Migratory locust)).